Here is a 360-residue protein sequence, read N- to C-terminus: Dihydroorotate dehydrogenase (quinone) (360 aa).

FMN contacts are provided by residues 66–70 (AGFDK) and Thr90. Lys70 is a substrate binding site. 115-119 (NRMGF) is a binding site for substrate. 2 residues coordinate FMN: Asn143 and Asn176. Asn176 provides a ligand contact to substrate. The active-site Nucleophile is Ser179. Asn181 contributes to the substrate binding site. 2 residues coordinate FMN: Lys212 and Thr240. Residue 241-242 (NT) coordinates substrate. FMN is bound by residues Gly264, Gly293, and 314–315 (YT).

Belongs to the dihydroorotate dehydrogenase family. Type 2 subfamily. Monomer. FMN serves as cofactor.

The protein resides in the cell membrane. The enzyme catalyses (S)-dihydroorotate + a quinone = orotate + a quinol. It participates in pyrimidine metabolism; UMP biosynthesis via de novo pathway; orotate from (S)-dihydroorotate (quinone route): step 1/1. In terms of biological role, catalyzes the conversion of dihydroorotate to orotate with quinone as electron acceptor. In Mycobacterium ulcerans (strain Agy99), this protein is Dihydroorotate dehydrogenase (quinone).